Here is a 402-residue protein sequence, read N- to C-terminus: Diaminopimelate decarboxylase (402 aa).

The residue at position 45 (lysine 45) is an N6-(pyridoxal phosphate)lysine. Residues glycine 224 and 259-262 contribute to the pyridoxal 5'-phosphate site; that span reads EPGR. Arginine 262, arginine 298, and tyrosine 302 together coordinate substrate. Cysteine 327 functions as the Proton donor in the catalytic mechanism. 2 residues coordinate substrate: glutamate 328 and tyrosine 356. Residue tyrosine 356 coordinates pyridoxal 5'-phosphate.

The protein belongs to the Orn/Lys/Arg decarboxylase class-II family. LysA subfamily. Homodimer. Pyridoxal 5'-phosphate is required as a cofactor.

The enzyme catalyses meso-2,6-diaminopimelate + H(+) = L-lysine + CO2. Its pathway is amino-acid biosynthesis; L-lysine biosynthesis via DAP pathway; L-lysine from DL-2,6-diaminopimelate: step 1/1. Specifically catalyzes the decarboxylation of meso-diaminopimelate (meso-DAP) to L-lysine. The protein is Diaminopimelate decarboxylase of Campylobacter jejuni subsp. jejuni serotype O:2 (strain ATCC 700819 / NCTC 11168).